Consider the following 417-residue polypeptide: Probable serpin E3 (417 aa).

A signal peptide spans 1 to 24; it reads MPQLSASSLFICLWLVDLCHVANS. N-linked (GlcNAc...) asparagine glycosylation is found at Asn50, Asn106, Asn140, Asn147, and Asn152.

This sequence belongs to the serpin family.

The protein resides in the secreted. Probable serine protease inhibitor. This Danio rerio (Zebrafish) protein is Probable serpin E3 (serpine3).